The primary structure comprises 251 residues: Probable transcriptional regulatory protein Mflv_3828 (251 aa).

This sequence belongs to the TACO1 family.

The protein resides in the cytoplasm. The chain is Probable transcriptional regulatory protein Mflv_3828 from Mycolicibacterium gilvum (strain PYR-GCK) (Mycobacterium gilvum (strain PYR-GCK)).